Consider the following 833-residue polypeptide: Zinc transporter ZIP10 (833 aa).

The N-terminal stretch at 1–25 (MKVHIHTKFCLICLLTFIFHHCNHC) is a signal peptide. The segment covering 30–48 (DHGPEELHRHHRGMTESES) has biased composition (basic and acidic residues). 2 disordered regions span residues 30–54 (DHGP…FSVQ) and 137–167 (AENH…IKAD). Polar residues predominate over residues 137-147 (AENHTTTSVTS). Residues 152 to 167 (KCDPEKEAAELPIKAD) show a composition bias toward basic and acidic residues. Asparagine 191 and asparagine 198 each carry an N-linked (GlcNAc...) asparagine glycan. Residues 200–209 (SVAHSEHGEP) show a composition bias toward basic and acidic residues. Disordered stretches follow at residues 200–257 (SVAH…NHDH) and 271–335 (RVHS…EDDR). Asparagine 218 carries an N-linked (GlcNAc...) asparagine glycan. Basic residues predominate over residues 229–241 (VKVRRKEKGKRKK). Basic and acidic residues-rich tracts occupy residues 281–315 (HLPE…EAPH) and 326–335 (SHKDQSEDDR). Residue asparagine 341 is glycosylated (N-linked (GlcNAc...) asparagine). 2 consecutive transmembrane segments (helical) span residues 413–433 (IISI…VPII) and 440–460 (FLLT…ALLH). The segment at 466–485 (QGGHDHSHQHTHGHGHSHGH) is disordered. Residues 497–517 (VLKGLVALGGIYLLFIIEHCI) traverse the membrane as a helical segment. Threonine 538 and threonine 555 each carry phosphothreonine. Serine 593 bears the Phosphoserine mark. 4 helical membrane passes run 689–709 (AIGA…IAVF), 734–754 (IVYN…GTAV), 761–781 (ITLW…LVDM), and 803–823 (FILQ…IALY).

The protein belongs to the ZIP transporter (TC 2.A.5) family. Interacts with SLC39A6. This interaction triggers cells to undergo EMT and mitosis. Found in a complex with SLC39A6, SLC39A10 and with the 'Ser-727' phosphorylated form of STAT3 throughout mitosis. Found in a complex with SLC39A6, SLC39A10 and with NCAM1; this complex controls NCAM1 phosphorylation and integration into focal adhesion complexes during epithelial-tomesenchymal transition. Found in a complex with SLC39A6, SLC39A10 and with GSK3B that controls NCAM1 phosphorylation. In terms of processing, undergoes N-terminal ectodomain shedding. In terms of tissue distribution, expressed in the liver, kidney and brain.

Its subcellular location is the cell membrane. It is found in the apical cell membrane. It catalyses the reaction Zn(2+)(in) = Zn(2+)(out). In terms of biological role, zinc-influx transporter. When associated with SLC39A6, the heterodimer formed by SLC39A10 and SLC39A6 mediates cellular zinc uptake to trigger cells to undergo epithelial-to-mesenchymal transition (EMT). mediates cellular zinc uptake to trigger cells to undergo epithelial-to-mesenchymal transition (EMT). SLC39A10-SLC39A6 heterodimers play also an essentiel role in initiating mitosis by importing zinc into cells to initiate a pathway resulting in the onset of mitosis. Plays an important for both mature B-cell maintenance and humoral immune responses. When associated with SLC39A10, the heterodimer controls NCAM1 phosphorylation and integration into focal adhesion complexes during EMT. This is Zinc transporter ZIP10 from Mus musculus (Mouse).